Reading from the N-terminus, the 191-residue chain is UPF0669 protein C6orf120 (191 aa).

Positions 1 to 30 (MAAPRGRAAPWTTALLLLLASQVLSPGSCA) are cleaved as a signal peptide. The N-linked (GlcNAc...) asparagine glycan is linked to N53.

Belongs to the UPF0669 family. In terms of tissue distribution, mainly expressed in hepatocytes and some weak expression in germinal center cells of lymph nodes.

Its subcellular location is the secreted. In terms of biological role, may be involved in induction of apoptosis in CD4(+) T-cells, but not CD8(+) T-cells or hepatocytes. This Homo sapiens (Human) protein is UPF0669 protein C6orf120 (C6orf120).